The sequence spans 202 residues: Endoribonuclease YbeY (202 aa).

Zn(2+) is bound by residues H120, H124, and H130.

Belongs to the endoribonuclease YbeY family. The cofactor is Zn(2+).

It localises to the cytoplasm. In terms of biological role, single strand-specific metallo-endoribonuclease involved in late-stage 70S ribosome quality control and in maturation of the 3' terminus of the 16S rRNA. In Corynebacterium kroppenstedtii (strain DSM 44385 / JCM 11950 / CIP 105744 / CCUG 35717), this protein is Endoribonuclease YbeY.